The sequence spans 380 residues: Probable cytosolic iron-sulfur protein assembly protein 1 (380 aa).

7 WD repeats span residues 10–49 (AHND…KFPL), 56–108 (THKR…VEYD), 135–175 (GHEN…EEFE), 182–221 (DHSQ…DEWS), 228–275 (GHEG…EEDK), 299–338 (VHKY…KWVI), and 346–380 (HGVH…LWNV).

Belongs to the WD repeat CIA1 family. In terms of assembly, interacts with NAR1.

The protein localises to the cytoplasm. Its subcellular location is the nucleus. Functionally, essential component of the cytosolic iron-sulfur (Fe/S) protein assembly machinery. Required for the maturation of extramitochondrial Fe/S proteins. The polypeptide is Probable cytosolic iron-sulfur protein assembly protein 1 (Candida dubliniensis (strain CD36 / ATCC MYA-646 / CBS 7987 / NCPF 3949 / NRRL Y-17841) (Yeast)).